A 237-amino-acid polypeptide reads, in one-letter code: Ribosomal RNA small subunit methyltransferase G (237 aa).

S-adenosyl-L-methionine-binding positions include Gly-75, Phe-80, 127–128 (AE), and Arg-146.

It belongs to the methyltransferase superfamily. RNA methyltransferase RsmG family.

The protein localises to the cytoplasm. Its function is as follows. Specifically methylates the N7 position of a guanine in 16S rRNA. The chain is Ribosomal RNA small subunit methyltransferase G from Synechococcus sp. (strain RCC307).